Reading from the N-terminus, the 191-residue chain is MDAHFLKSASDLKDCPQDNIPEICFMGRSNVGKSSLINAFFKKKLAKTSATPGRTQLLNYFEYKDKRFVDLPGYGFAKINKNKKDFITNLLTQFLNFRSNLVGVVLIVDSGVVTVQDQEVVKIILQTGLNFLIVANKFDKLNQSERYFSLKNIANFLKVNFDKCVFASTKTHHNLALVHKKIFELFVEDER.

Residues 19–188 enclose the EngB-type G domain; sequence NIPEICFMGR…HKKIFELFVE (170 aa). Residues 27–34, 53–57, 70–73, 136–139, and 167–169 each bind GTP; these read GRSNVGKS, GRTQL, DLPG, NKFD, and AST. Residues Ser34 and Thr55 each contribute to the Mg(2+) site.

Belongs to the TRAFAC class TrmE-Era-EngA-EngB-Septin-like GTPase superfamily. EngB GTPase family. Requires Mg(2+) as cofactor.

Necessary for normal cell division and for the maintenance of normal septation. The protein is Probable GTP-binding protein EngB of Mycoplasma genitalium (strain ATCC 33530 / DSM 19775 / NCTC 10195 / G37) (Mycoplasmoides genitalium).